A 255-amino-acid polypeptide reads, in one-letter code: 5'-nucleotidase SurE (255 aa).

A divalent metal cation contacts are provided by D8, D9, S40, and N95.

The protein belongs to the SurE nucleotidase family. Requires a divalent metal cation as cofactor.

Its subcellular location is the cytoplasm. It catalyses the reaction a ribonucleoside 5'-phosphate + H2O = a ribonucleoside + phosphate. Its function is as follows. Nucleotidase that shows phosphatase activity on nucleoside 5'-monophosphates. The polypeptide is 5'-nucleotidase SurE (Solidesulfovibrio magneticus (strain ATCC 700980 / DSM 13731 / RS-1) (Desulfovibrio magneticus)).